The sequence spans 300 residues: Geranylgeranyl pyrophosphate synthase (300 aa).

Position 1 is an N-acetylmethionine (Met1). The isopentenyl diphosphate site is built by Lys25, Arg28, and His57. Positions 64 and 68 each coordinate Mg(2+). Residue Arg73 participates in dimethylallyl diphosphate binding. Arg74 provides a ligand contact to isopentenyl diphosphate. Dimethylallyl diphosphate contacts are provided by Lys151, Thr152, Gln185, Lys202, and Lys212.

The protein belongs to the FPP/GGPP synthase family. Homohexamer; trimer of homodimers. Mg(2+) is required as a cofactor.

The protein resides in the cytoplasm. Its subcellular location is the perinuclear region. It is found in the myofibril. It localises to the sarcomere. The protein localises to the z line. The enzyme catalyses isopentenyl diphosphate + dimethylallyl diphosphate = (2E)-geranyl diphosphate + diphosphate. It catalyses the reaction isopentenyl diphosphate + (2E)-geranyl diphosphate = (2E,6E)-farnesyl diphosphate + diphosphate. The catalysed reaction is isopentenyl diphosphate + (2E,6E)-farnesyl diphosphate = (2E,6E,10E)-geranylgeranyl diphosphate + diphosphate. The protein operates within isoprenoid biosynthesis; farnesyl diphosphate biosynthesis; farnesyl diphosphate from geranyl diphosphate and isopentenyl diphosphate: step 1/1. It functions in the pathway isoprenoid biosynthesis; geranyl diphosphate biosynthesis; geranyl diphosphate from dimethylallyl diphosphate and isopentenyl diphosphate: step 1/1. Its pathway is isoprenoid biosynthesis; geranylgeranyl diphosphate biosynthesis; geranylgeranyl diphosphate from farnesyl diphosphate and isopentenyl diphosphate: step 1/1. Catalyzes the trans-addition of the three molecules of IPP onto DMAPP to form geranylgeranyl pyrophosphate, an important precursor of carotenoids and geranylated proteins. The sequence is that of Geranylgeranyl pyrophosphate synthase (GGPS1) from Bos taurus (Bovine).